The chain runs to 309 residues: Aspartate carbamoyltransferase catalytic subunit (309 aa).

Positions 58 and 59 each coordinate carbamoyl phosphate. Lys-86 is an L-aspartate binding site. Arg-108, His-136, and Gln-139 together coordinate carbamoyl phosphate. Residues Arg-169 and Arg-223 each contribute to the L-aspartate site. Residues Gly-265 and Pro-266 each coordinate carbamoyl phosphate.

This sequence belongs to the aspartate/ornithine carbamoyltransferase superfamily. ATCase family. In terms of assembly, heterododecamer (2C3:3R2) of six catalytic PyrB chains organized as two trimers (C3), and six regulatory PyrI chains organized as three dimers (R2).

The catalysed reaction is carbamoyl phosphate + L-aspartate = N-carbamoyl-L-aspartate + phosphate + H(+). Its pathway is pyrimidine metabolism; UMP biosynthesis via de novo pathway; (S)-dihydroorotate from bicarbonate: step 2/3. Functionally, catalyzes the condensation of carbamoyl phosphate and aspartate to form carbamoyl aspartate and inorganic phosphate, the committed step in the de novo pyrimidine nucleotide biosynthesis pathway. In Akkermansia muciniphila (strain ATCC BAA-835 / DSM 22959 / JCM 33894 / BCRC 81048 / CCUG 64013 / CIP 107961 / Muc), this protein is Aspartate carbamoyltransferase catalytic subunit.